Reading from the N-terminus, the 310-residue chain is Putative S-adenosyl-L-methionine-dependent methyltransferase Mvan_1346 (310 aa).

S-adenosyl-L-methionine contacts are provided by residues D136 and 165–166 (DL).

The protein belongs to the UPF0677 family.

In terms of biological role, exhibits S-adenosyl-L-methionine-dependent methyltransferase activity. The protein is Putative S-adenosyl-L-methionine-dependent methyltransferase Mvan_1346 of Mycolicibacterium vanbaalenii (strain DSM 7251 / JCM 13017 / BCRC 16820 / KCTC 9966 / NRRL B-24157 / PYR-1) (Mycobacterium vanbaalenii).